The primary structure comprises 165 residues: Growth arrest and DNA damage-inducible protein GADD45 alpha (165 aa).

A Phosphothreonine modification is found at T2.

This sequence belongs to the GADD45 family. In terms of assembly, interacts with AURKA, PCNA, GADD45GIP1 and MAPK14.

It is found in the nucleus. Might affect PCNA interaction with some CDK (cell division protein kinase) complexes; stimulates DNA excision repair in vitro and inhibits entry of cells into S phase. In T-cells, functions as a regulator of p38 MAPKs by inhibiting p88 phosphorylation and activity. This is Growth arrest and DNA damage-inducible protein GADD45 alpha (GADD45A) from Cricetulus griseus (Chinese hamster).